The primary structure comprises 530 residues: Autoinducer-2 kinase (530 aa).

It belongs to the FGGY kinase family.

It is found in the cytoplasm. It catalyses the reaction (S)-4,5-dihydroxypentane-2,3-dione + ATP = (2S)-2-hydroxy-3,4-dioxopentyl phosphate + ADP + H(+). In terms of biological role, catalyzes the phosphorylation of autoinducer-2 (AI-2) to phospho-AI-2, which subsequently inactivates the transcriptional regulator LsrR and leads to the transcription of the lsr operon. Phosphorylates the ring-open form of (S)-4,5-dihydroxypentane-2,3-dione (DPD), which is the precursor to all AI-2 signaling molecules, at the C5 position. This is Autoinducer-2 kinase from Escherichia coli O139:H28 (strain E24377A / ETEC).